The following is a 192-amino-acid chain: UPF0301 protein BceJ2315_30870 (192 aa).

Belongs to the UPF0301 (AlgH) family.

The chain is UPF0301 protein BceJ2315_30870 from Burkholderia cenocepacia (strain ATCC BAA-245 / DSM 16553 / LMG 16656 / NCTC 13227 / J2315 / CF5610) (Burkholderia cepacia (strain J2315)).